A 501-amino-acid polypeptide reads, in one-letter code: Archaemetzincin-1 (501 aa).

His261 is a binding site for Zn(2+). The active-site Proton acceptor is Glu262. Zn(2+)-binding residues include His265, Cys272, Cys277, Cys296, and Cys299. Residues 349 to 370 (DSGMGCESDTEPVTSPSEPVTP) form a disordered region.

It belongs to the peptidase M54 family. Zn(2+) serves as cofactor.

Functionally, probable zinc metalloprotease. The chain is Archaemetzincin-1 (Amz1) from Rattus norvegicus (Rat).